The sequence spans 40 residues: Photosystem II reaction center protein J (40 aa).

The chain crosses the membrane as a helical span at residues 8–28; that stretch reads IPLWLIGTIAGILVIGLVGIF.

Belongs to the PsbJ family. As to quaternary structure, PSII is composed of 1 copy each of membrane proteins PsbA, PsbB, PsbC, PsbD, PsbE, PsbF, PsbH, PsbI, PsbJ, PsbK, PsbL, PsbM, PsbT, PsbX, PsbY, PsbZ, Psb30/Ycf12, at least 3 peripheral proteins of the oxygen-evolving complex and a large number of cofactors. It forms dimeric complexes.

The protein resides in the plastid. Its subcellular location is the chloroplast thylakoid membrane. Its function is as follows. One of the components of the core complex of photosystem II (PSII). PSII is a light-driven water:plastoquinone oxidoreductase that uses light energy to abstract electrons from H(2)O, generating O(2) and a proton gradient subsequently used for ATP formation. It consists of a core antenna complex that captures photons, and an electron transfer chain that converts photonic excitation into a charge separation. This is Photosystem II reaction center protein J from Anthoceros angustus (Hornwort).